The primary structure comprises 48 residues: Large ribosomal subunit protein bL34 (48 aa).

This sequence belongs to the bacterial ribosomal protein bL34 family.

The polypeptide is Large ribosomal subunit protein bL34 (rpmH) (Mycoplasma genitalium (strain ATCC 33530 / DSM 19775 / NCTC 10195 / G37) (Mycoplasmoides genitalium)).